The sequence spans 336 residues: tRNA N6-adenosine threonylcarbamoyltransferase (336 aa).

Fe cation contacts are provided by His-114 and His-118. Substrate contacts are provided by residues 136–140 (LVSGG), Asp-169, Gly-182, Asp-186, and Asn-275. Fe cation is bound at residue Asp-302.

Belongs to the KAE1 / TsaD family. Fe(2+) serves as cofactor.

The protein localises to the cytoplasm. The catalysed reaction is L-threonylcarbamoyladenylate + adenosine(37) in tRNA = N(6)-L-threonylcarbamoyladenosine(37) in tRNA + AMP + H(+). Required for the formation of a threonylcarbamoyl group on adenosine at position 37 (t(6)A37) in tRNAs that read codons beginning with adenine. Is involved in the transfer of the threonylcarbamoyl moiety of threonylcarbamoyl-AMP (TC-AMP) to the N6 group of A37, together with TsaE and TsaB. TsaD likely plays a direct catalytic role in this reaction. The protein is tRNA N6-adenosine threonylcarbamoyltransferase of Streptococcus agalactiae serotype Ia (strain ATCC 27591 / A909 / CDC SS700).